The sequence spans 181 residues: Ferritin heavy chain (181 aa).

Position 1 is an N-acetylmethionine (Met-1). Thr-2 is subject to N-acetylthreonine; in Ferritin heavy chain, N-terminally processed. Positions 11 to 160 constitute a Ferritin-like diiron domain; that stretch reads QNYHQDSEAA…DHITNLHRMG (150 aa). Residue Ser-179 is modified to Phosphoserine.

Belongs to the ferritin family. As to quaternary structure, oligomer of 24 subunits. There are two types of subunits: L (light) chain and H (heavy) chain. The major chain can be light or heavy, depending on the species and tissue type. The functional molecule forms a roughly spherical shell with a diameter of 12 nm and contains a central cavity into which the insoluble mineral iron core is deposited. Interacts with NCOA4; NCOA4 promotes targeting of the iron-binding ferritin complex to autolysosomes following starvation or iron depletion. In terms of assembly, (Microbial infection) Interacts with classical swine fever virus protein NS4B. (Microbial infection) Interacts with Porcine circovirus 2 ORF4 protein.

Its subcellular location is the cytoplasm. The protein resides in the lysosome. It localises to the cytoplasmic vesicle. It is found in the autophagosome. The catalysed reaction is 4 Fe(2+) + O2 + 4 H(+) = 4 Fe(3+) + 2 H2O. Stores iron in a soluble, non-toxic, readily available form. Important for iron homeostasis. Has ferroxidase activity. Iron is taken up in the ferrous form and deposited as ferric hydroxides after oxidation. Also plays a role in delivery of iron to cells. Mediates iron uptake in capsule cells of the developing kidney. Delivery to lysosomes is mediated by the cargo receptor NCOA4 for autophagic degradation and release of iron. Functionally, (Microbial infection) Is unable to assume its function upon interaction with viral proteins, thereby increasing Fe concentration in the cytoplasm. This would inhibit the accumulation of reactive oxygen in host cells, leading to reduced apoptosis and increasing the survival of virus infected cell. This is Ferritin heavy chain (FTH1) from Sus scrofa (Pig).